Consider the following 452-residue polypeptide: Phosphoglucosamine mutase (452 aa).

The active-site Phosphoserine intermediate is Ser-108. Residues Ser-108, Asp-247, Asp-249, and Asp-251 each coordinate Mg(2+). Ser-108 carries the post-translational modification Phosphoserine.

This sequence belongs to the phosphohexose mutase family. Requires Mg(2+) as cofactor. Post-translationally, activated by phosphorylation.

It catalyses the reaction alpha-D-glucosamine 1-phosphate = D-glucosamine 6-phosphate. In terms of biological role, catalyzes the conversion of glucosamine-6-phosphate to glucosamine-1-phosphate. The protein is Phosphoglucosamine mutase of Burkholderia pseudomallei (strain K96243).